The following is a 592-amino-acid chain: Aspartate--tRNA(Asp/Asn) ligase (592 aa).

Glu182 lines the L-aspartate pocket. The tract at residues 206 to 209 is aspartate; that stretch reads QIFK. Arg228 contacts L-aspartate. Residues 228-230 and Gln237 each bind ATP; that span reads RDE. His455 lines the L-aspartate pocket. Residue Glu489 participates in ATP binding. Arg496 is an L-aspartate binding site. 541-544 is a binding site for ATP; sequence GLDR.

The protein belongs to the class-II aminoacyl-tRNA synthetase family. Type 1 subfamily. In terms of assembly, homodimer.

The protein localises to the cytoplasm. It carries out the reaction tRNA(Asx) + L-aspartate + ATP = L-aspartyl-tRNA(Asx) + AMP + diphosphate. In terms of biological role, aspartyl-tRNA synthetase with relaxed tRNA specificity since it is able to aspartylate not only its cognate tRNA(Asp) but also tRNA(Asn). Reaction proceeds in two steps: L-aspartate is first activated by ATP to form Asp-AMP and then transferred to the acceptor end of tRNA(Asp/Asn). This is Aspartate--tRNA(Asp/Asn) ligase from Caldanaerobacter subterraneus subsp. tengcongensis (strain DSM 15242 / JCM 11007 / NBRC 100824 / MB4) (Thermoanaerobacter tengcongensis).